We begin with the raw amino-acid sequence, 322 residues long: Anthranilate phosphoribosyltransferase (322 aa).

Residues Gly71, 74–75 (GD), Thr79, 81–84 (NVST), 99–107 (KFGNRSASG), and Ala111 contribute to the 5-phospho-alpha-D-ribose 1-diphosphate site. Gly71 provides a ligand contact to anthranilate. A Mg(2+)-binding site is contributed by Ser83. Residue Asn102 participates in anthranilate binding. Arg157 serves as a coordination point for anthranilate. Asp215 and Glu216 together coordinate Mg(2+).

It belongs to the anthranilate phosphoribosyltransferase family. In terms of assembly, homodimer. Requires Mg(2+) as cofactor.

The enzyme catalyses N-(5-phospho-beta-D-ribosyl)anthranilate + diphosphate = 5-phospho-alpha-D-ribose 1-diphosphate + anthranilate. It functions in the pathway amino-acid biosynthesis; L-tryptophan biosynthesis; L-tryptophan from chorismate: step 2/5. Catalyzes the transfer of the phosphoribosyl group of 5-phosphorylribose-1-pyrophosphate (PRPP) to anthranilate to yield N-(5'-phosphoribosyl)-anthranilate (PRA). This chain is Anthranilate phosphoribosyltransferase, found in Thermoplasma acidophilum (strain ATCC 25905 / DSM 1728 / JCM 9062 / NBRC 15155 / AMRC-C165).